A 439-amino-acid polypeptide reads, in one-letter code: GTPase Der (439 aa).

EngA-type G domains lie at 4 to 168 and 177 to 352; these read PIVA…KDDE and INIA…DNYT. GTP contacts are provided by residues 10–17, 57–61, 120–123, 183–190, 230–234, and 295–298; these read GRPNVGKS, DTGGI, NKID, GKPNVGKS, DTAGL, and NKWD. The KH-like domain maps to 353–437; that stretch reads KRVKTGVLND…GIKTEFRERK (85 aa).

It belongs to the TRAFAC class TrmE-Era-EngA-EngB-Septin-like GTPase superfamily. EngA (Der) GTPase family. In terms of assembly, associates with the 50S ribosomal subunit.

In terms of biological role, GTPase that plays an essential role in the late steps of ribosome biogenesis. The protein is GTPase Der of Clostridium botulinum (strain Loch Maree / Type A3).